The sequence spans 256 residues: Nuclear shuttle protein (256 aa).

The segment covering 1 to 16 (MYSTSNRRGRSQTQRG) has biased composition (polar residues). The tract at residues 1 to 46 (MYSTSNRRGRSQTQRGSHVRRTGVKRSYGAARGDDRRRPNVVSKTQ) is disordered. The short motif at 21–42 (RTGVKRSYGAARGDDRRRPNVV) is the Bipartite nuclear localization signal element. The short motif at 81–96 (SYVKTVPNRTRTYIKL) is the Nuclear localization signal element. The interval 150 to 187 (ELFGARIHCHGNLSVVPALKDRYYIRHVTKRVVSLEKD) is interaction with Arabidopsis thaliana NSI protein. Positions 177–198 (VTKRVVSLEKDTLLIDLHGTTQ) match the Nuclear export signal motif.

Belongs to the begomovirus nuclear shuttle protein family. Binds to single-stranded and double-stranded viral DNA. Interacts with the host nuclear shuttle interacting (NSI) protein. This interaction may allow NSP to recruit NSI monomers to the viral genome and thus regulate nuclear export of viral genome by NSP.

It localises to the host nucleus. The protein resides in the host cytoplasm. The protein localises to the host cell membrane. Functionally, binds to the genomic viral ssDNA, shuttles it into and out of the cell nucleus. Begomoviruses use 2 proteins to transport their DNA from cell to cell. The nuclear shuttle protein (NSP) shuttles it between nucleus and cytoplasm and the movement protein (MP) probably transports the DNA-NSP complex to the cell periphery and facilitates movement across the cell wall. The polypeptide is Nuclear shuttle protein (Squash leaf curl virus (SLCV)).